The chain runs to 113 residues: Hydrogenase maturation factor HypA (113 aa).

H2 is a Ni(2+) binding site. Positions 73, 76, 89, and 92 each coordinate Zn(2+).

The protein belongs to the HypA/HybF family.

In terms of biological role, involved in the maturation of [NiFe] hydrogenases. Required for nickel insertion into the metal center of the hydrogenase. This Rhodopseudomonas palustris (strain TIE-1) protein is Hydrogenase maturation factor HypA.